Here is a 396-residue protein sequence, read N- to C-terminus: Elongation factor Tu (396 aa).

Residues 10–206 form the tr-type G domain; it reads KPHVNVGTIG…ALDSYIPDPE (197 aa). Residues 19–26 form a G1 region; sequence GHVDHGKT. 19–26 provides a ligand contact to GTP; it reads GHVDHGKT. A Mg(2+)-binding site is contributed by Thr-26. The segment at 60 to 64 is G2; the sequence is GITIN. Positions 81-84 are G3; the sequence is DCPG. GTP-binding positions include 81 to 85 and 136 to 139; these read DCPGH and NKCD. Residues 136–139 form a G4 region; sequence NKCD. Positions 174-176 are G5; the sequence is SAL.

It belongs to the TRAFAC class translation factor GTPase superfamily. Classic translation factor GTPase family. EF-Tu/EF-1A subfamily. In terms of assembly, monomer.

The protein localises to the cytoplasm. It catalyses the reaction GTP + H2O = GDP + phosphate + H(+). Its function is as follows. GTP hydrolase that promotes the GTP-dependent binding of aminoacyl-tRNA to the A-site of ribosomes during protein biosynthesis. This chain is Elongation factor Tu, found in Dechloromonas aromatica (strain RCB).